The chain runs to 753 residues: MGSGTSTQHHFAFQNAERAFKAAALIQRWYRRYVARLEMRRRCTWSIFQSIEYAGQQDQVKLHDFFSYLMDHFIPSSHNDRDFLTRIFTEDRFAQDSEMKKCSDYESIEVPDSYTGPRLSFPLLPDHATALVEAFRLKQQLHARYVLNLLYETKKHLVQLPNINRVSTCYSEEITVCGDLHGQLDDLIFIFYKNGLPSPERSYVFNGDFVDRGKDSVEILMILFAFMLVYPKEFHLNRGNHEDHMVNLRYGFTKEVMNKYKVHGKEILRTLQDVFCWLPLATLIDEKVLILHGGVSDITDLELLDKIERSKIVSTMRCKTRQKSEKQMEEKRRANQKSSAQGPIPWFLPESRSLPSSPLRLGSYKAQKTSRSSSIPCSGSLDGRELSRQVRSSVELELERCRQQAGLLVTGEKEEPSRSASEADSEAGELRKPTQEEWRQVVDILWSDPMAQEGCKANTIRGGGCYFGPDVTQQLLQKYNMQFLIRSHECKPEGYEFCHNRKVLTIFSASNYYEVGSNRGAYVKLGPALTPHIVQYQANKVTHTLTMRQRISRVEESALRALREKLFAHSSDLLSEFKKHDADKVGLITLSDWAAAVESVLHLGLPWRMLRPQLVNSSADNMLEYKSWLKNLAKEQLSRENIQSSLLETLYRNRSNLETIFRIIDSDHSGFISLDEFRQTWKLFSSHMNIDITDDCICDLARSIDFNKDGHIDINEFLEAFRLVEKSCPEGDASECPQATNAKDSGCSSPGAH.

One can recognise an IQ domain in the interval 21 to 46 (KAAALIQRWYRRYVARLEMRRRCTWS). A catalytic region spans residues 128-540 (ATALVEAFRL…PHIVQYQANK (413 aa)). Residues aspartate 179, histidine 181, aspartate 208, and asparagine 240 each contribute to the Mn(2+) site. Histidine 241 serves as the catalytic Proton donor. Histidine 292 serves as a coordination point for Mn(2+). Disordered regions lie at residues 318 to 382 (CKTR…GSLD) and 409 to 435 (VTGE…KPTQ). Positions 322–333 (QKSEKQMEEKRR) are enriched in basic and acidic residues. The segment covering 348 to 361 (LPESRSLPSSPLRL) has biased composition (low complexity). Residues 366-377 (AQKTSRSSSIPC) are compositionally biased toward polar residues. Histidine 488 provides a ligand contact to Mn(2+). EF-hand domains lie at 568-603 (AHSS…VLHL), 652-687 (RNRS…FSSH), and 692-727 (ITDD…VEKS). Ca(2+) is bound by residues aspartate 665, aspartate 667, serine 669, glutamate 676, aspartate 705, asparagine 707, aspartate 709, histidine 711, and glutamate 716. Positions 732–753 (DASECPQATNAKDSGCSSPGAH) are disordered. Residues 737-753 (PQATNAKDSGCSSPGAH) are compositionally biased toward polar residues.

This sequence belongs to the PPP phosphatase family. Requires Mn(2+) as cofactor. Retinal specific.

It is found in the cytoplasm. The protein resides in the cell projection. Its subcellular location is the cilium. It localises to the photoreceptor outer segment. The protein localises to the photoreceptor inner segment. It carries out the reaction O-phospho-L-seryl-[protein] + H2O = L-seryl-[protein] + phosphate. It catalyses the reaction O-phospho-L-threonyl-[protein] + H2O = L-threonyl-[protein] + phosphate. With respect to regulation, activated by calcium. May play a role in phototransduction. May dephosphorylate photoactivated rhodopsin. May function as a calcium sensing regulator of ionic currents, energy production or synaptic transmission. The protein is Serine/threonine-protein phosphatase with EF-hands 2 (PPEF2) of Homo sapiens (Human).